The sequence spans 108 residues: uncharacterized protein (108 aa).

Gly2 carries N-myristoyl glycine; by host lipidation.

This is an uncharacterized protein from Acanthamoeba polyphaga (Amoeba).